Consider the following 372-residue polypeptide: Carbamoyl phosphate synthase small chain (372 aa).

The CPSase stretch occupies residues 1-182; sequence MTLYCKRGYK…PKAPIVHLGN (182 aa). L-glutamine-binding residues include serine 53, glycine 234, and glycine 236. Positions 186–372 constitute a Glutamine amidotransferase type-1 domain; it reads TIVVVDCGVK…KFKKMVSRNA (187 aa). Catalysis depends on cysteine 262, which acts as the Nucleophile. The L-glutamine site is built by leucine 263, glutamine 266, asparagine 304, glycine 306, and tyrosine 307. Residues histidine 347 and glutamate 349 contribute to the active site.

It belongs to the CarA family. In terms of assembly, composed of two chains; the small (or glutamine) chain promotes the hydrolysis of glutamine to ammonia, which is used by the large (or ammonia) chain to synthesize carbamoyl phosphate. Tetramer of heterodimers (alpha,beta)4.

It carries out the reaction hydrogencarbonate + L-glutamine + 2 ATP + H2O = carbamoyl phosphate + L-glutamate + 2 ADP + phosphate + 2 H(+). The enzyme catalyses L-glutamine + H2O = L-glutamate + NH4(+). It participates in amino-acid biosynthesis; L-arginine biosynthesis; carbamoyl phosphate from bicarbonate: step 1/1. It functions in the pathway pyrimidine metabolism; UMP biosynthesis via de novo pathway; (S)-dihydroorotate from bicarbonate: step 1/3. Small subunit of the glutamine-dependent carbamoyl phosphate synthetase (CPSase). CPSase catalyzes the formation of carbamoyl phosphate from the ammonia moiety of glutamine, carbonate, and phosphate donated by ATP, constituting the first step of 2 biosynthetic pathways, one leading to arginine and/or urea and the other to pyrimidine nucleotides. The small subunit (glutamine amidotransferase) binds and cleaves glutamine to supply the large subunit with the substrate ammonia. This Sulfurisphaera tokodaii (strain DSM 16993 / JCM 10545 / NBRC 100140 / 7) (Sulfolobus tokodaii) protein is Carbamoyl phosphate synthase small chain.